A 402-amino-acid polypeptide reads, in one-letter code: Endoglucanase 1 (402 aa).

Gln-1 carries the post-translational modification Pyrrolidone carboxylic acid. Cystine bridges form between Cys-18–Cys-24, Cys-51–Cys-73, and Cys-63–Cys-69. N-linked (GlcNAc...) asparagine glycosylation occurs at Asn-89. Intrachain disulfides connect Cys-140–Cys-365, Cys-172–Cys-195, Cys-176–Cys-194, Cys-215–Cys-234, Cys-223–Cys-228, and Cys-239–Cys-315. Glu-197 functions as the Nucleophile in the catalytic mechanism. Glu-202 (proton donor) is an active-site residue. The N-linked (GlcNAc...) asparagine glycan is linked to Asn-247.

It belongs to the glycosyl hydrolase 7 (cellulase C) family. In terms of assembly, monomer.

It is found in the secreted. The catalysed reaction is Endohydrolysis of (1-&gt;4)-beta-D-glucosidic linkages in cellulose, lichenin and cereal beta-D-glucans.. The biological conversion of cellulose to glucose generally requires three types of hydrolytic enzymes: (1) Endoglucanases which cut internal beta-1,4-glucosidic bonds; (2) Exocellobiohydrolases that cut the disaccharide cellobiose from the non-reducing end of the cellulose polymer chain; (3) Beta-1,4-glucosidases which hydrolyze the cellobiose and other short cello-oligosaccharides to glucose. The protein is Endoglucanase 1 (CEL7B) of Humicola insolens (Soft-rot fungus).